The chain runs to 518 residues: MIPDVSQALAWLEKHPQALKGIQRGLERETLRVNADGTLATTGHPEALGSALTHKWITTDFAEALLEFITPVDGDIEHMLTFMRDLHRYTARNMGDERMWPLSMPCYIAEGQDIELAQYGTSNTGRFKTLYREGLKNRYGALMQTISGVHYNFSLPMAFWQAKCGDISGADAKEKISAGYFRVIRNYYRFGWVIPYLFGASPAICSSFLQGKPTSLPFEKTECGMYYLPYATSLRLSDLGYTNKSQSNLGITFNDLYEYVAGLKQAIKTPSEEYAKIGIEKDGKRLQINSNVLQIENELYAPIRPKRVTRSGESPSDALLRGGIEYIEVRSLDINPFSPIGVDEQQVRFLDLFMVWCALADAPEMSSKELACTRVNWNRVILEGRKPGLTLGIGCETAQFPLPQVGKDLFRDLKRVAQTLDSINGGEAYQKVCDELVACFDNPDLTFSARILRSMIDTGIGGTGKAFAEAYRNLLREEPLEILREEDFVAEREASERRQQEMEAADTEPFAVWLEKHA.

The protein belongs to the glutamate--cysteine ligase type 1 family. Type 1 subfamily.

It carries out the reaction L-cysteine + L-glutamate + ATP = gamma-L-glutamyl-L-cysteine + ADP + phosphate + H(+). The protein operates within sulfur metabolism; glutathione biosynthesis; glutathione from L-cysteine and L-glutamate: step 1/2. The polypeptide is Glutamate--cysteine ligase (Escherichia coli O127:H6 (strain E2348/69 / EPEC)).